Reading from the N-terminus, the 405-residue chain is Glutamate-pyruvate aminotransferase AlaA (405 aa).

Residues glycine 41 and asparagine 179 each coordinate L-alanine. Lysine 240 is subject to N6-(pyridoxal phosphate)lysine. Arginine 378 contributes to the L-alanine binding site.

It belongs to the class-I pyridoxal-phosphate-dependent aminotransferase family. Homodimer. Pyridoxal 5'-phosphate is required as a cofactor.

Its subcellular location is the cytoplasm. The catalysed reaction is L-alanine + 2-oxoglutarate = pyruvate + L-glutamate. It functions in the pathway amino-acid biosynthesis; L-alanine biosynthesis. In terms of biological role, involved in the biosynthesis of alanine. Catalyzes the transamination of pyruvate by glutamate, leading to the formation of L-alanine and 2-oxoglutarate. Is also able to catalyze the reverse reaction. This chain is Glutamate-pyruvate aminotransferase AlaA, found in Escherichia coli (strain K12).